The following is a 326-amino-acid chain: 3-isopropylmalate dehydrogenase (326 aa).

Arg-81, Arg-91, Arg-112, and Asp-198 together coordinate substrate. Residues Asp-198, Asp-222, and Asp-226 each coordinate Mg(2+). NAD(+) is bound at residue 255-267 (GAAFDIAGKGIAN).

This sequence belongs to the isocitrate and isopropylmalate dehydrogenases family. As to quaternary structure, homotetramer. Requires Mg(2+) as cofactor. Mn(2+) serves as cofactor.

It localises to the cytoplasm. The catalysed reaction is (2R,3S)-3-isopropylmalate + NAD(+) = 4-methyl-2-oxopentanoate + CO2 + NADH. It functions in the pathway amino-acid biosynthesis; L-leucine biosynthesis; L-leucine from 3-methyl-2-oxobutanoate: step 3/4. Its function is as follows. Catalyzes the oxidation of 3-carboxy-2-hydroxy-4-methylpentanoate (3-isopropylmalate) to 3-carboxy-4-methyl-2-oxopentanoate. The product decarboxylates to 4-methyl-2 oxopentanoate. The protein is 3-isopropylmalate dehydrogenase (leuB) of Archaeoglobus fulgidus (strain ATCC 49558 / DSM 4304 / JCM 9628 / NBRC 100126 / VC-16).